The primary structure comprises 394 residues: Alanine racemase 2 (394 aa).

Lys39 (proton acceptor; specific for D-alanine) is an active-site residue. Lys39 carries the N6-(pyridoxal phosphate)lysine modification. Substrate is bound at residue Arg139. Residue Tyr272 is the Proton acceptor; specific for L-alanine of the active site. Substrate is bound at residue Met320.

It belongs to the alanine racemase family. Pyridoxal 5'-phosphate is required as a cofactor.

The catalysed reaction is L-alanine = D-alanine. It functions in the pathway amino-acid biosynthesis; D-alanine biosynthesis; D-alanine from L-alanine: step 1/1. Functionally, catalyzes the interconversion of L-alanine and D-alanine. May also act on other amino acids. The chain is Alanine racemase 2 (alr2) from Bacillus subtilis (strain 168).